Here is a 211-residue protein sequence, read N- to C-terminus: Large ribosomal subunit protein uL4 (211 aa).

The span at 46–55 (GNHATKTRSM) shows a compositional bias: polar residues. Positions 46-89 (GNHATKTRSMVSGGGKKPWSQKGTGRARQGSTRAPHWVGGGTVH) are disordered.

This sequence belongs to the universal ribosomal protein uL4 family. As to quaternary structure, part of the 50S ribosomal subunit.

Functionally, one of the primary rRNA binding proteins, this protein initially binds near the 5'-end of the 23S rRNA. It is important during the early stages of 50S assembly. It makes multiple contacts with different domains of the 23S rRNA in the assembled 50S subunit and ribosome. In terms of biological role, forms part of the polypeptide exit tunnel. This chain is Large ribosomal subunit protein uL4, found in Leptospira interrogans serogroup Icterohaemorrhagiae serovar copenhageni (strain Fiocruz L1-130).